The chain runs to 380 residues: 1-deoxy-D-xylulose 5-phosphate reductoisomerase (380 aa).

NADPH-binding residues include Thr10, Gly11, Ser12, Ile13, Gly36, Arg37, Asn38, and Asn120. Lys121 is a binding site for 1-deoxy-D-xylulose 5-phosphate. Residue Glu122 participates in NADPH binding. Position 146 (Asp146) interacts with Mn(2+). 1-deoxy-D-xylulose 5-phosphate is bound by residues Ser147, Glu148, Ser172, and His195. Glu148 contacts Mn(2+). Gly201 contributes to the NADPH binding site. Residues Ser208, Asn213, Lys214, and Glu217 each contribute to the 1-deoxy-D-xylulose 5-phosphate site. Glu217 contacts Mn(2+).

Belongs to the DXR family. Mg(2+) is required as a cofactor. Requires Mn(2+) as cofactor.

The catalysed reaction is 2-C-methyl-D-erythritol 4-phosphate + NADP(+) = 1-deoxy-D-xylulose 5-phosphate + NADPH + H(+). It functions in the pathway isoprenoid biosynthesis; isopentenyl diphosphate biosynthesis via DXP pathway; isopentenyl diphosphate from 1-deoxy-D-xylulose 5-phosphate: step 1/6. Its function is as follows. Catalyzes the NADPH-dependent rearrangement and reduction of 1-deoxy-D-xylulose-5-phosphate (DXP) to 2-C-methyl-D-erythritol 4-phosphate (MEP). The sequence is that of 1-deoxy-D-xylulose 5-phosphate reductoisomerase from Listeria innocua serovar 6a (strain ATCC BAA-680 / CLIP 11262).